A 215-amino-acid chain; its full sequence is Ribosomal RNA small subunit methyltransferase G (215 aa).

S-adenosyl-L-methionine contacts are provided by residues Gly77, Phe82, 130 to 131 (IE), and Arg146.

The protein belongs to the methyltransferase superfamily. RNA methyltransferase RsmG family.

It localises to the cytoplasm. It catalyses the reaction guanosine(527) in 16S rRNA + S-adenosyl-L-methionine = N(7)-methylguanosine(527) in 16S rRNA + S-adenosyl-L-homocysteine. Specifically methylates the N7 position of guanine in position 527 of 16S rRNA. This Bartonella henselae (strain ATCC 49882 / DSM 28221 / CCUG 30454 / Houston 1) (Rochalimaea henselae) protein is Ribosomal RNA small subunit methyltransferase G.